Consider the following 568-residue polypeptide: Urease subunit alpha (568 aa).

Residues Gly130–Phe568 enclose the Urease domain. His135, His137, and Lys218 together coordinate Ni(2+). Lys218 is subject to N6-carboxylysine. Residue His220 coordinates substrate. Positions 247 and 273 each coordinate Ni(2+). Catalysis depends on His321, which acts as the Proton donor. Asp361 contacts Ni(2+).

This sequence belongs to the metallo-dependent hydrolases superfamily. Urease alpha subunit family. Heterotrimer of UreA (gamma), UreB (beta) and UreC (alpha) subunits. Three heterotrimers associate to form the active enzyme. It depends on Ni cation as a cofactor. In terms of processing, carboxylation allows a single lysine to coordinate two nickel ions.

Its subcellular location is the cytoplasm. It catalyses the reaction urea + 2 H2O + H(+) = hydrogencarbonate + 2 NH4(+). The protein operates within nitrogen metabolism; urea degradation; CO(2) and NH(3) from urea (urease route): step 1/1. The sequence is that of Urease subunit alpha from Burkholderia multivorans (strain ATCC 17616 / 249).